A 620-amino-acid polypeptide reads, in one-letter code: 1-deoxy-D-xylulose-5-phosphate synthase (620 aa).

Thiamine diphosphate is bound by residues H80 and 121–123 (GHS). D152 provides a ligand contact to Mg(2+). Thiamine diphosphate-binding positions include 153 to 154 (GA), N181, Y288, and E370. A Mg(2+)-binding site is contributed by N181.

The protein belongs to the transketolase family. DXPS subfamily. Homodimer. The cofactor is Mg(2+). It depends on thiamine diphosphate as a cofactor.

It carries out the reaction D-glyceraldehyde 3-phosphate + pyruvate + H(+) = 1-deoxy-D-xylulose 5-phosphate + CO2. Its pathway is metabolic intermediate biosynthesis; 1-deoxy-D-xylulose 5-phosphate biosynthesis; 1-deoxy-D-xylulose 5-phosphate from D-glyceraldehyde 3-phosphate and pyruvate: step 1/1. Functionally, catalyzes the acyloin condensation reaction between C atoms 2 and 3 of pyruvate and glyceraldehyde 3-phosphate to yield 1-deoxy-D-xylulose-5-phosphate (DXP). The sequence is that of 1-deoxy-D-xylulose-5-phosphate synthase from Enterobacter sp. (strain 638).